The chain runs to 194 residues: dCTP deaminase (194 aa).

DCTP-binding positions include 110–115 (RSSLAR), aspartate 128, 136–138 (VLE), tyrosine 171, lysine 178, and glutamine 182. Glutamate 138 (proton donor/acceptor) is an active-site residue.

It belongs to the dCTP deaminase family. Homotrimer.

It carries out the reaction dCTP + H2O + H(+) = dUTP + NH4(+). It participates in pyrimidine metabolism; dUMP biosynthesis; dUMP from dCTP (dUTP route): step 1/2. Its function is as follows. Catalyzes the deamination of dCTP to dUTP. This Haemophilus ducreyi (strain 35000HP / ATCC 700724) protein is dCTP deaminase.